Consider the following 67-residue polypeptide: Large ribosomal subunit protein uL29 (67 aa).

This sequence belongs to the universal ribosomal protein uL29 family.

This Rubrobacter xylanophilus (strain DSM 9941 / JCM 11954 / NBRC 16129 / PRD-1) protein is Large ribosomal subunit protein uL29.